We begin with the raw amino-acid sequence, 276 residues long: Diaminopimelate epimerase (276 aa).

3 residues coordinate substrate: N13, Q46, and N66. C75 acts as the Proton donor in catalysis. Substrate contacts are provided by residues 76–77, N159, N192, and 210–211; these read GN and ER. C219 acts as the Proton acceptor in catalysis. 220–221 contributes to the substrate binding site; it reads GT.

This sequence belongs to the diaminopimelate epimerase family. As to quaternary structure, homodimer.

It is found in the cytoplasm. The enzyme catalyses (2S,6S)-2,6-diaminopimelate = meso-2,6-diaminopimelate. It functions in the pathway amino-acid biosynthesis; L-lysine biosynthesis via DAP pathway; DL-2,6-diaminopimelate from LL-2,6-diaminopimelate: step 1/1. Functionally, catalyzes the stereoinversion of LL-2,6-diaminopimelate (L,L-DAP) to meso-diaminopimelate (meso-DAP), a precursor of L-lysine and an essential component of the bacterial peptidoglycan. This is Diaminopimelate epimerase from Teredinibacter turnerae (strain ATCC 39867 / T7901).